We begin with the raw amino-acid sequence, 416 residues long: 4-hydroxy-3-methylbut-2-en-1-yl diphosphate synthase (flavodoxin) (416 aa).

[4Fe-4S] cluster-binding residues include cysteine 304, cysteine 307, cysteine 350, and glutamate 357.

Belongs to the IspG family. The cofactor is [4Fe-4S] cluster.

The catalysed reaction is (2E)-4-hydroxy-3-methylbut-2-enyl diphosphate + oxidized [flavodoxin] + H2O + 2 H(+) = 2-C-methyl-D-erythritol 2,4-cyclic diphosphate + reduced [flavodoxin]. It participates in isoprenoid biosynthesis; isopentenyl diphosphate biosynthesis via DXP pathway; isopentenyl diphosphate from 1-deoxy-D-xylulose 5-phosphate: step 5/6. Functionally, converts 2C-methyl-D-erythritol 2,4-cyclodiphosphate (ME-2,4cPP) into 1-hydroxy-2-methyl-2-(E)-butenyl 4-diphosphate. This chain is 4-hydroxy-3-methylbut-2-en-1-yl diphosphate synthase (flavodoxin), found in Rhizobium etli (strain CIAT 652).